Reading from the N-terminus, the 800-residue chain is DNA topoisomerase 4 subunit A (800 aa).

Residues 31-496 (LPDVRDGLKP…ISEIKIDKEV (466 aa)) form the Topo IIA-type catalytic domain. The O-(5'-phospho-DNA)-tyrosine intermediate role is filled by Tyr119.

Belongs to the type II topoisomerase GyrA/ParC subunit family. ParC type 2 subfamily. Heterotetramer composed of ParC and ParE.

It is found in the cell membrane. The enzyme catalyses ATP-dependent breakage, passage and rejoining of double-stranded DNA.. Its function is as follows. Topoisomerase IV is essential for chromosome segregation. It relaxes supercoiled DNA. Performs the decatenation events required during the replication of a circular DNA molecule. This is DNA topoisomerase 4 subunit A from Staphylococcus epidermidis (strain ATCC 12228 / FDA PCI 1200).